A 794-amino-acid polypeptide reads, in one-letter code: Copper-exporting P-type ATPase (794 aa).

2 consecutive HMA domains span residues 4–69 (TTLT…YDVA) and 71–137 (EQVE…YDAE). Cu(+) is bound by residues Cys-15, Cys-18, Cys-82, and Cys-85. A run of 6 helical transmembrane segments spans residues 161-181 (IISAILSLPLLLVMVVHISPI), 186-206 (ILVNPWVQLILSTPVQFIIGW), 225-245 (VLVAVGTSAAYFYSIYEMMMW), 255-275 (LYFETSAILITLILLGKYLEA), 410-430 (YFVPIVVSIAVITFIIWIIFV), and 437-457 (PALVSAISVLVIACPCALGLA). Catalysis depends on Asp-494, which acts as the 4-aspartylphosphate intermediate. Residues Asp-689 and Asp-693 each contribute to the Mg(2+) site. The next 2 helical transmembrane spans lie at 747-767 (LFWAFGYNVAGIPIAACGLLA) and 773-789 (AAMALSSVSVVMNALRL).

It belongs to the cation transport ATPase (P-type) (TC 3.A.3) family. Type IB subfamily.

The protein localises to the cell membrane. The enzyme catalyses Cu(+)(in) + ATP + H2O = Cu(+)(out) + ADP + phosphate + H(+). In terms of biological role, involved in copper export. The sequence is that of Copper-exporting P-type ATPase (copA) from Staphylococcus epidermidis (strain ATCC 35984 / DSM 28319 / BCRC 17069 / CCUG 31568 / BM 3577 / RP62A).